Here is a 357-residue protein sequence, read N- to C-terminus: EGF-like domain-containing protein 2 (357 aa).

The first 20 residues, 1–20 (MPPSLSHLFLLSTFASLALC), serve as a signal peptide directing secretion. EGF-like domains follow at residues 21-55 (SFYCKNPGYPCLNGGTCLYNGECNCTSGFRGFNCG) and 61-93 (ISAACTVECHNKGICFNGDKCYCTKDYMGPTCQ). Disulfide bonds link Cys-24-Cys-37, Cys-31-Cys-43, Cys-45-Cys-54, Cys-65-Cys-75, Cys-69-Cys-81, and Cys-83-Cys-92.

In terms of tissue distribution, prismatic layer of shell (at protein level). Expressed primarily in the mantle with highest level in the mantle edge and lower level in the mantle pallium.

Its subcellular location is the secreted. In Pinctada maxima (Silver-lipped pearl oyster), this protein is EGF-like domain-containing protein 2.